Here is a 190-residue protein sequence, read N- to C-terminus: Potassium-transporting ATPase KdpC subunit (190 aa).

The chain crosses the membrane as a helical span at residues 10–30 (TFLFLLLITGGVYPLLTTALG).

Belongs to the KdpC family. The system is composed of three essential subunits: KdpA, KdpB and KdpC.

It is found in the cell inner membrane. Its function is as follows. Part of the high-affinity ATP-driven potassium transport (or Kdp) system, which catalyzes the hydrolysis of ATP coupled with the electrogenic transport of potassium into the cytoplasm. This subunit acts as a catalytic chaperone that increases the ATP-binding affinity of the ATP-hydrolyzing subunit KdpB by the formation of a transient KdpB/KdpC/ATP ternary complex. The protein is Potassium-transporting ATPase KdpC subunit of Escherichia fergusonii (strain ATCC 35469 / DSM 13698 / CCUG 18766 / IAM 14443 / JCM 21226 / LMG 7866 / NBRC 102419 / NCTC 12128 / CDC 0568-73).